The chain runs to 132 residues: Small ribosomal subunit protein uS11 (132 aa).

It belongs to the universal ribosomal protein uS11 family. In terms of assembly, part of the 30S ribosomal subunit. Interacts with proteins S7 and S18. Binds to IF-3.

Located on the platform of the 30S subunit, it bridges several disparate RNA helices of the 16S rRNA. Forms part of the Shine-Dalgarno cleft in the 70S ribosome. This chain is Small ribosomal subunit protein uS11, found in Lachnoclostridium phytofermentans (strain ATCC 700394 / DSM 18823 / ISDg) (Clostridium phytofermentans).